The sequence spans 409 residues: Cobalt-precorrin-5B C(1)-methyltransferase (409 aa).

It belongs to the CbiD family.

It carries out the reaction Co-precorrin-5B + S-adenosyl-L-methionine = Co-precorrin-6A + S-adenosyl-L-homocysteine. The protein operates within cofactor biosynthesis; adenosylcobalamin biosynthesis; cob(II)yrinate a,c-diamide from sirohydrochlorin (anaerobic route): step 6/10. Catalyzes the methylation of C-1 in cobalt-precorrin-5B to form cobalt-precorrin-6A. The protein is Cobalt-precorrin-5B C(1)-methyltransferase of Methanopyrus kandleri (strain AV19 / DSM 6324 / JCM 9639 / NBRC 100938).